The primary structure comprises 435 residues: Glucan 1,3-beta-glucosidase (435 aa).

The N-terminal stretch at 1-30 is a signal peptide; that stretch reads MLFPVLHLPKAMKFSSFSLIASSLLSLVAA. The active-site Proton donor is the glutamate 222. Intrachain disulfides connect cysteine 306/cysteine 432 and cysteine 331/cysteine 357. Glutamate 323 functions as the Nucleophile in the catalytic mechanism.

It belongs to the glycosyl hydrolase 5 (cellulase A) family.

The protein resides in the secreted. It carries out the reaction Successive hydrolysis of beta-D-glucose units from the non-reducing ends of (1-&gt;3)-beta-D-glucans, releasing alpha-glucose.. Its function is as follows. Beta-glucanases participate in the metabolism of beta-glucan, the main structural component of the cell wall. It could also function biosynthetically as a transglycosylase. The sequence is that of Glucan 1,3-beta-glucosidase from Pichia angusta (Yeast).